A 231-amino-acid chain; its full sequence is Pathogenesis-related thaumatin-like protein 3.7 (231 aa).

Residues 1–27 (MATVSDLALLLVAGLVAISLHMQEAGA) form the signal peptide. Disulfide bonds link Cys36–Cys230, Cys77–Cys87, Cys92–Cys98, Cys143–Cys218, Cys148–Cys201, Cys156–Cys166, Cys170–Cys179, and Cys180–Cys188.

Belongs to the thaumatin family.

In terms of biological role, may be involved in disease resistance. In Cryptomeria japonica (Japanese cedar), this protein is Pathogenesis-related thaumatin-like protein 3.7.